Consider the following 278-residue polypeptide: Large ribosomal subunit protein uL2 (278 aa).

The disordered stretch occupies residues 211 to 278 (KRWLGKRPQS…LIIRRRKGSK (68 aa)). A compositionally biased stretch (basic and acidic residues) spans 258–270 (KTRDTKKASEKLI).

It belongs to the universal ribosomal protein uL2 family. In terms of assembly, part of the 50S ribosomal subunit. Forms a bridge to the 30S subunit in the 70S ribosome.

Its function is as follows. One of the primary rRNA binding proteins. Required for association of the 30S and 50S subunits to form the 70S ribosome, for tRNA binding and peptide bond formation. It has been suggested to have peptidyltransferase activity; this is somewhat controversial. Makes several contacts with the 16S rRNA in the 70S ribosome. The sequence is that of Large ribosomal subunit protein uL2 from Lactobacillus helveticus (strain DPC 4571).